Consider the following 250-residue polypeptide: 3-deoxy-manno-octulosonate cytidylyltransferase (250 aa).

This sequence belongs to the KdsB family.

The protein resides in the cytoplasm. It carries out the reaction 3-deoxy-alpha-D-manno-oct-2-ulosonate + CTP = CMP-3-deoxy-beta-D-manno-octulosonate + diphosphate. The protein operates within nucleotide-sugar biosynthesis; CMP-3-deoxy-D-manno-octulosonate biosynthesis; CMP-3-deoxy-D-manno-octulosonate from 3-deoxy-D-manno-octulosonate and CTP: step 1/1. It functions in the pathway bacterial outer membrane biogenesis; lipopolysaccharide biosynthesis. Activates KDO (a required 8-carbon sugar) for incorporation into bacterial lipopolysaccharide in Gram-negative bacteria. This is 3-deoxy-manno-octulosonate cytidylyltransferase from Legionella pneumophila (strain Lens).